Here is a 153-residue protein sequence, read N- to C-terminus: uncharacterized protein (153 aa).

Residue Ala2 is modified to N-acetylalanine.

This is an uncharacterized protein from Arabidopsis thaliana (Mouse-ear cress).